Here is a 743-residue protein sequence, read N- to C-terminus: Coiled-coil domain-containing protein 30 (743 aa).

Composition is skewed to basic and acidic residues over residues 1–22 (MSQEKNEMFESEWSKEREREKQ) and 133–193 (SPKE…MKPE). Disordered regions lie at residues 1 to 25 (MSQEKNEMFESEWSKEREREKQLAS), 114 to 193 (ENIC…MKPE), 208 to 233 (SLLQSQSSGDSSDDSGAQYPSSGDKL), and 695 to 715 (SKEAMASSKSPEKSPENLVCS). Coiled-coil stretches lie at residues 21–98 (KQLA…QLNH) and 165–580 (REGQ…LIHS). A compositionally biased stretch (low complexity) spans 208 to 223 (SLLQSQSSGDSSDDSG).

This sequence belongs to the prefoldin subunit beta family.

The chain is Coiled-coil domain-containing protein 30 (CCDC30) from Macaca fascicularis (Crab-eating macaque).